Here is a 102-residue protein sequence, read N- to C-terminus: Small ribosomal subunit protein uS10 (102 aa).

Belongs to the universal ribosomal protein uS10 family. In terms of assembly, part of the 30S ribosomal subunit.

Functionally, involved in the binding of tRNA to the ribosomes. The protein is Small ribosomal subunit protein uS10 of Paracoccus denitrificans (strain Pd 1222).